We begin with the raw amino-acid sequence, 707 residues long: GDNF-inducible zinc finger protein 1 (707 aa).

A BTB domain is found at 31–103; that stretch reads CDVTVIVDYQ…VYTARVRVKE (73 aa). Over residues 149-165 the composition is skewed to polar residues; that stretch reads VEASSGPQVSVTPSSKA. 2 disordered regions span residues 149-221 and 243-309; these read VEAS…PKIR and RRLR…KDGE. Composition is skewed to basic and acidic residues over residues 198-213, 243-278, and 287-298; these read PSKK…KDVA, RRLR…EPAS, and VEREESLQKVEG. 10 consecutive C2H2-type zinc fingers follow at residues 316-338, 347-370, 376-399, 406-428, 434-456, 462-484, 490-512, 518-540, 546-568, and 574-596; these read FQCT…IKYH, YRCD…RHVH, FPCE…LQVH, HRCG…ERTH, YGCT…LRVH, FVCD…KRCH, FMCE…NRIH, FKCE…IKVH, YCCD…HRIH, and YMCN…TSIH. A Phosphoserine modification is found at S612.

This sequence belongs to the krueppel C2H2-type zinc-finger protein family. In terms of assembly, interacts with NCL.

It is found in the cytoplasm. The protein localises to the nucleus. The protein resides in the nucleoplasm. Its subcellular location is the nucleolus. In terms of biological role, transcriptional repressor that binds the GZF1 responsive element (GRE) (consensus: 5'-TGCGCN[TG][CA]TATA-3'). May be regulating VSX2/HOX10 expression. In Rattus norvegicus (Rat), this protein is GDNF-inducible zinc finger protein 1 (Gzf1).